The following is a 374-amino-acid chain: MWKISNENDIFKKRKPLPPKKSEESQPELTPWQKQNQEYLKKQAEEAASKGENEQAEVTITLQEQSQEEPQQHLPQETVEEEEHFADRLPNVKKTRNKRLYRRLAFILTCLGTAILVALYFVSPLSRLSEVTVSGNKSVESQAIIQQSKLETGSGLWEQYSNRNYFSANIQKKFPIIKKANIKLNGINSFKIDIQEYQIVALAATKGGYHPILENGKTLAETTKAAESGKPIFENFKEDKLIPELMASYNKLPQEIKQGISEIKYAPSKTNKDLINVYMNDGNRVIVNISDLSEKMAYYSQVAEQMDKPGIVDMEVGIFSYPYEKESEETGSEVSEDSAVENQEVVDPNAGVATDEANNGTPTNGENQEVQQAE.

The disordered stretch occupies residues 1 to 90 (MWKISNENDI…EEEHFADRLP (90 aa)). Residues 1–103 (MWKISNENDI…KTRNKRLYRR (103 aa)) are Cytoplasmic-facing. The span at 39–53 (YLKKQAEEAASKGEN) shows a compositional bias: basic and acidic residues. Residues 56 to 75 (AEVTITLQEQSQEEPQQHLP) are compositionally biased toward polar residues. Residues 104–124 (LAFILTCLGTAILVALYFVSP) form a helical membrane-spanning segment. Over 125–374 (LSRLSEVTVS…GENQEVQQAE (250 aa)) the chain is Extracellular. A POTRA domain is found at 126–197 (SRLSEVTVSG…NSFKIDIQEY (72 aa)). A disordered region spans residues 325 to 374 (KESEETGSEVSEDSAVENQEVVDPNAGVATDEANNGTPTNGENQEVQQAE). A compositionally biased stretch (acidic residues) spans 326-339 (ESEETGSEVSEDSA). The segment covering 356 to 374 (EANNGTPTNGENQEVQQAE) has biased composition (polar residues).

Belongs to the FtsQ/DivIB family. DivIB subfamily.

It localises to the cell membrane. Functionally, cell division protein that may be involved in stabilizing or promoting the assembly of the division complex. The sequence is that of Cell division protein DivIB from Enterococcus faecalis (strain ATCC 700802 / V583).